The primary structure comprises 523 residues: Cytidine and dCMP deaminase domain-containing protein 1 (523 aa).

Over residues 1–11 (MKETDQMQSLE) the composition is skewed to polar residues. Disordered stretches follow at residues 1–27 (MKETDQMQSLEGSGAERSVGTQTGSMT) and 55–81 (QGQKSQKTEEESRGPLGDNEELTRVST). The CMP/dCMP-type deaminase 1 domain occupies 71-169 (GDNEELTRVS…SLLTEASSSE (99 aa)). Zn(2+) contacts are provided by His-110, Cys-135, and Cys-138. Residues 272-284 (NLRQNMKDLILLL) carry the Nuclear export signal motif. The CMP/dCMP-type deaminase 2 domain maps to 318-483 (EVARHCMVQA…LNPSEAYSLD (166 aa)). Residue His-399 participates in Zn(2+) binding. The Proton donor role is filled by Glu-401. Zn(2+)-binding residues include Cys-427 and Cys-430. Residues 478-523 (EAYSLDPNEPERRENGVLRRRSAKDEQRSSKRPRLETRSAGRATLQ) form a disordered region. Basic and acidic residues predominate over residues 486–516 (EPERRENGVLRRRSAKDEQRSSKRPRLETRS). Positions 489–511 (RRENGVLRRRSAKDEQRSSKRPR) match the Bipartite nuclear localization signal motif.

This sequence belongs to the cytidine and deoxycytidylate deaminase family. Requires Zn(2+) as cofactor.

It is found in the cytoplasm. It localises to the nucleus. It carries out the reaction 2'-deoxycytidine + H2O + H(+) = 2'-deoxyuridine + NH4(+). The catalysed reaction is cytidine + H2O + H(+) = uridine + NH4(+). Its function is as follows. Catalyzes the deamination of cytidine and deoxycytidine into uridine and deoxyuridine, respectively. May play an important role in testicular development and spermatogenesis. The polypeptide is Cytidine and dCMP deaminase domain-containing protein 1 (Cdadc1) (Mus musculus (Mouse)).